Consider the following 282-residue polypeptide: Blarina toxin (282 aa).

The N-terminal stretch at 1–17 is a signal peptide; that stretch reads MCFLLLCLTLTLAGTGA. Residues 18–29 constitute a propeptide, activation peptide; it reads VPTGPSIEIHSR. A Peptidase S1 domain is found at 30–279; that stretch reads IIGGWECDKH…YISWIQETIK (250 aa). 5 disulfides stabilise this stretch: Cys36/Cys194, Cys57/Cys73, Cys170/Cys240, Cys205/Cys219, and Cys230/Cys255. The active-site Charge relay system is the His72. Residue Ser100 is glycosylated (O-linked (GalNAc...) serine). N-linked (GlcNAc...) asparagine glycosylation is found at Asn109 and Asn122. Asp138 serves as the catalytic Charge relay system. The active-site Charge relay system is the Ser234.

This sequence belongs to the peptidase S1 family. Kallikrein subfamily. Submaxillary and sublingual salivary glands.

The protein localises to the secreted. With respect to regulation, strongly inhibited by aprotinin, moderately inhibited by secretory leukoprotease inhibitor, the Kunitz-type soybean trypsin inhibitor, and leupeptin, and not inhibited by urinary trypsin inhibitor or alpha-1 protease inhibitor. Functionally, has kallikrein-like activity, converts kininogens to kinins, and has dilatory effects on the blood vessel walls. Shows highest activity toward Pro-Phe-Arg-MCA and Boc-Val-Leu-Lys-MCA in vitro. Has preference for Arg and Lys in position P1 and hydrophobic residues in position P2. In Blarina brevicauda (Northern short-tailed shrew), this protein is Blarina toxin (BTX).